A 159-amino-acid polypeptide reads, in one-letter code: S-ribosylhomocysteine lyase (159 aa).

Fe cation contacts are provided by histidine 53, histidine 57, and cysteine 124.

Belongs to the LuxS family. Homodimer. Fe cation serves as cofactor.

The catalysed reaction is S-(5-deoxy-D-ribos-5-yl)-L-homocysteine = (S)-4,5-dihydroxypentane-2,3-dione + L-homocysteine. Involved in the synthesis of autoinducer 2 (AI-2) which is secreted by bacteria and is used to communicate both the cell density and the metabolic potential of the environment. The regulation of gene expression in response to changes in cell density is called quorum sensing. Catalyzes the transformation of S-ribosylhomocysteine (RHC) to homocysteine (HC) and 4,5-dihydroxy-2,3-pentadione (DPD). This is S-ribosylhomocysteine lyase from Desulfotalea psychrophila (strain LSv54 / DSM 12343).